A 273-amino-acid polypeptide reads, in one-letter code: Hydroxyethylthiazole kinase (273 aa).

M49 is a substrate binding site. The ATP site is built by R125 and T171. Position 198 (G198) interacts with substrate.

This sequence belongs to the Thz kinase family. Mg(2+) is required as a cofactor.

It carries out the reaction 5-(2-hydroxyethyl)-4-methylthiazole + ATP = 4-methyl-5-(2-phosphooxyethyl)-thiazole + ADP + H(+). The protein operates within cofactor biosynthesis; thiamine diphosphate biosynthesis; 4-methyl-5-(2-phosphoethyl)-thiazole from 5-(2-hydroxyethyl)-4-methylthiazole: step 1/1. Functionally, catalyzes the phosphorylation of the hydroxyl group of 4-methyl-5-beta-hydroxyethylthiazole (THZ). The polypeptide is Hydroxyethylthiazole kinase (Desulforudis audaxviator (strain MP104C)).